The following is a 118-amino-acid chain: UPF0344 protein YisL (118 aa).

4 helical membrane passes run 4-24, 33-53, 62-82, and 93-113; these read LHIT…SLYS, ITHM…AELF, EYAG…MLLI, and LWVG…HLPI.

It belongs to the UPF0344 family.

The protein resides in the cell membrane. In Bacillus subtilis (strain 168), this protein is UPF0344 protein YisL (yisL).